A 414-amino-acid polypeptide reads, in one-letter code: Gamma-glutamyl phosphate reductase (414 aa).

Belongs to the gamma-glutamyl phosphate reductase family.

The protein resides in the cytoplasm. It catalyses the reaction L-glutamate 5-semialdehyde + phosphate + NADP(+) = L-glutamyl 5-phosphate + NADPH + H(+). The protein operates within amino-acid biosynthesis; L-proline biosynthesis; L-glutamate 5-semialdehyde from L-glutamate: step 2/2. Catalyzes the NADPH-dependent reduction of L-glutamate 5-phosphate into L-glutamate 5-semialdehyde and phosphate. The product spontaneously undergoes cyclization to form 1-pyrroline-5-carboxylate. This chain is Gamma-glutamyl phosphate reductase, found in Xanthomonas oryzae pv. oryzae (strain MAFF 311018).